A 694-amino-acid chain; its full sequence is Long-chain-fatty-acid--CoA ligase 4 (694 aa).

The disordered stretch occupies residues 1–21 (MTEQYSVAVGEAANEHETAPR). ATP is bound at residue 269–280 (YTSGSTGTPKGV). Residues 527 to 576 (DGWFRTGDIAEWTPKGQVKIIDRKKNLVKTLNGEYIALEKLESIYRSNPY) carry the FACS motif.

Belongs to the ATP-dependent AMP-binding enzyme family. As to quaternary structure, interacts with FAT1. It depends on Mg(2+) as a cofactor.

It localises to the lipid droplet. The catalysed reaction is a long-chain fatty acid + ATP + CoA = a long-chain fatty acyl-CoA + AMP + diphosphate. It catalyses the reaction (9Z)-hexadecenoate + ATP + CoA = (9Z)-hexadecenoyl-CoA + AMP + diphosphate. It carries out the reaction (9Z)-octadecenoate + ATP + CoA = (9Z)-octadecenoyl-CoA + AMP + diphosphate. The enzyme catalyses hexadecanoate + ATP + CoA = hexadecanoyl-CoA + AMP + diphosphate. In terms of biological role, activates long-chain fatty acids (LCFA) by esterification of the fatty acids into metabolically active CoA-thioesters for subsequent degradation or incorporation into phospholipids. Also facilitates the transport of LCFAs into the cell, either by active transport or by decreasing the intracellular LCFA concentration. Contributes, with FAA1, to the activation of imported myristate. Also involved in long-chain base (LCB) uptake. In contrast ot LCFA uptake, LCB uptake does not require ATP, suggesting that the enzyme is directly involved in LCB uptake. Involved in the sphingolipid-to-glycerolipid metabolic pathway, converting the sphingolipid metabolite hexadecenoic acid to hexadecenoyl-CoA, which is then further converted to glycerolipids. This Saccharomyces cerevisiae (strain ATCC 204508 / S288c) (Baker's yeast) protein is Long-chain-fatty-acid--CoA ligase 4 (FAA4).